Consider the following 402-residue polypeptide: 4-hydroxy-3-methylbut-2-enyl diphosphate reductase (402 aa).

Cys66 serves as a coordination point for [4Fe-4S] cluster. His96 provides a ligand contact to (2E)-4-hydroxy-3-methylbut-2-enyl diphosphate. His96 serves as a coordination point for dimethylallyl diphosphate. Residue His96 participates in isopentenyl diphosphate binding. Position 157 (Cys157) interacts with [4Fe-4S] cluster. Position 185 (His185) interacts with (2E)-4-hydroxy-3-methylbut-2-enyl diphosphate. His185 serves as a coordination point for dimethylallyl diphosphate. Residue His185 coordinates isopentenyl diphosphate. Glu187 serves as the catalytic Proton donor. Thr250 lines the (2E)-4-hydroxy-3-methylbut-2-enyl diphosphate pocket. Position 288 (Cys288) interacts with [4Fe-4S] cluster. (2E)-4-hydroxy-3-methylbut-2-enyl diphosphate contacts are provided by Ser317, Ser318, Asn319, and Ser379. 4 residues coordinate dimethylallyl diphosphate: Ser317, Ser318, Asn319, and Ser379. The isopentenyl diphosphate site is built by Ser317, Ser318, Asn319, and Ser379.

The protein belongs to the IspH family. [4Fe-4S] cluster serves as cofactor.

The enzyme catalyses isopentenyl diphosphate + 2 oxidized [2Fe-2S]-[ferredoxin] + H2O = (2E)-4-hydroxy-3-methylbut-2-enyl diphosphate + 2 reduced [2Fe-2S]-[ferredoxin] + 2 H(+). The catalysed reaction is dimethylallyl diphosphate + 2 oxidized [2Fe-2S]-[ferredoxin] + H2O = (2E)-4-hydroxy-3-methylbut-2-enyl diphosphate + 2 reduced [2Fe-2S]-[ferredoxin] + 2 H(+). The protein operates within isoprenoid biosynthesis; dimethylallyl diphosphate biosynthesis; dimethylallyl diphosphate from (2E)-4-hydroxy-3-methylbutenyl diphosphate: step 1/1. It functions in the pathway isoprenoid biosynthesis; isopentenyl diphosphate biosynthesis via DXP pathway; isopentenyl diphosphate from 1-deoxy-D-xylulose 5-phosphate: step 6/6. Catalyzes the conversion of 1-hydroxy-2-methyl-2-(E)-butenyl 4-diphosphate (HMBPP) into a mixture of isopentenyl diphosphate (IPP) and dimethylallyl diphosphate (DMAPP). Acts in the terminal step of the DOXP/MEP pathway for isoprenoid precursor biosynthesis. The sequence is that of 4-hydroxy-3-methylbut-2-enyl diphosphate reductase from Nostoc sp. (strain PCC 7120 / SAG 25.82 / UTEX 2576).